Here is a 475-residue protein sequence, read N- to C-terminus: Ribulose bisphosphate carboxylase large chain (475 aa).

A propeptide spanning residues 1–2 (MS) is cleaved from the precursor. An N-acetylproline modification is found at Pro3. The residue at position 14 (Lys14) is an N6,N6,N6-trimethyllysine. Substrate contacts are provided by Asn123 and Thr173. Residue Lys175 is the Proton acceptor of the active site. Residue Lys177 coordinates substrate. Residues Lys201, Asp203, and Glu204 each coordinate Mg(2+). Lys201 carries the post-translational modification N6-carboxylysine. His294 functions as the Proton acceptor in the catalytic mechanism. Substrate is bound by residues Arg295, His327, and Ser379.

Belongs to the RuBisCO large chain family. Type I subfamily. Heterohexadecamer of 8 large chains and 8 small chains; disulfide-linked. The disulfide link is formed within the large subunit homodimers. Requires Mg(2+) as cofactor. In terms of processing, the disulfide bond which can form in the large chain dimeric partners within the hexadecamer appears to be associated with oxidative stress and protein turnover.

It is found in the plastid. The protein localises to the chloroplast. It catalyses the reaction 2 (2R)-3-phosphoglycerate + 2 H(+) = D-ribulose 1,5-bisphosphate + CO2 + H2O. The catalysed reaction is D-ribulose 1,5-bisphosphate + O2 = 2-phosphoglycolate + (2R)-3-phosphoglycerate + 2 H(+). In terms of biological role, ruBisCO catalyzes two reactions: the carboxylation of D-ribulose 1,5-bisphosphate, the primary event in carbon dioxide fixation, as well as the oxidative fragmentation of the pentose substrate in the photorespiration process. Both reactions occur simultaneously and in competition at the same active site. In Staurastrum punctulatum (Green alga), this protein is Ribulose bisphosphate carboxylase large chain.